We begin with the raw amino-acid sequence, 219 residues long: GPI ethanolamine phosphate transferase, stabilizing subunit (219 aa).

A run of 6 helical transmembrane segments spans residues 11 to 31 (YTNL…SFFV), 42 to 62 (TWLC…YLVV), 86 to 106 (CFLM…APLI), 113 to 133 (FLFA…LLGP), 155 to 175 (LQIT…PIPL), and 189 to 209 (TLGA…WIYW).

This sequence belongs to the PIGF family. In terms of assembly, part of the ethanolamine phosphate transferase 3 complex composed by PIGO and PIGF. Part of the ethanolamine phosphate transferase 2 complex with PIGG. PIGF is required to stabilize PIGG and PIGO.

It localises to the endoplasmic reticulum membrane. Its pathway is glycolipid biosynthesis; glycosylphosphatidylinositol-anchor biosynthesis. In terms of biological role, stabilizing subunit of the ethanolamine phosphate transferase 3 and ethanolamine phosphate transferase 2 complexes that sequentially transfer an ethanolamine phosphate (EtNP) from a phosphatidylethanolamine (PE) to the 6-OH position of the third alpha-1,2-linked mannose and the second alpha-1,6-linked mannose of the alpha-D-Man-(1-&gt;2)-alpha-D-Man-(1-&gt;6)-2-PEtn-alpha-D-Man-(1-&gt;4)-alpha-D-GlcN-(1-&gt;6)-(1-radyl,2-acyl-sn-glycero-3-phospho)-2-acyl-inositol (also termed H6) intermediate to generate a 6-PEtn-alpha-D-Man-(1-&gt;2)-6-PEtn-alpha-D-Man-(1-&gt;6)-2-PEtn-alpha-D-Man-(1-&gt;4)-alpha-D-GlcN-(1-&gt;6)-(1-radyl,2-acyl-sn-glycero-3-phospho)-2-acyl-inositol (also termed H8). Participates in the tenth and eleventh steps of the glycosylphosphatidylinositol-anchor biosynthesis, in association with PIGO and PIGG, respectively. The chain is GPI ethanolamine phosphate transferase, stabilizing subunit from Mus musculus (Mouse).